The sequence spans 516 residues: MSVMNEPTVDFHLKLNEQQFHIPNELLKRNLKQCQKLIDKEATALEKSFEELDRLVRNPQNDESSMALLNEIIQKVERLERKLTKRVNVELQLLQRIDARIKYYQQLDQIKQSGDRNRLLEWYQSYTNLLISDYLTRNSMYEGEDDISCSSTPPPARLKRKLSSASSQLTTATSNNDPDRSHVNPGVEYLKQQGLDLLLDYDILLTTNRISKQLTINHELGPLLDWIKENATYLKHTSSMLEFEARFQEYIEYVKVEDYSKAITCFQTHLVKFLYSNPLDLQQAAGLLVFIKACKSNISSYVPTPRHEEIVKQQTLLQSKEDFWSFFFLKLPKSSKKDHKTNIEVKNNELAASVDIKRYMELLDDRRWEKLNEMFLKAYYSMYGISYHDPLLIYLSLGISSLKTKDCLHERRAFVSPNNELSEFLSSEVLRNACPVCSPEFAPIAQKLPYAHQVQSRLFENPVMLPSGNVYDAEKLKALAQTLRKRKLVVMGEDEVLDPIAGHTYALTDFITMYPT.

Residues 143-185 (GEDDISCSSTPPPARLKRKLSSASSQLTTATSNNDPDRSHVNP) form a disordered region. Residues 163-174 (SSASSQLTTATS) show a composition bias toward low complexity. In terms of domain architecture, CTLH spans 203–261 (ILLTTNRISKQLTINHELGPLLDWIKENATYLKHTSSMLEFEARFQEYIEYVKVEDYSK). An RING-Gid-type zinc finger spans residues 434-501 (CPVCSPEFAP…GEDEVLDPIA (68 aa)).

It belongs to the FYV10 family.

It localises to the cytoplasm. The protein resides in the nucleus. Functionally, involved in the proteasome-dependent degradation of fructose-1,6-bisphosphatase. The protein is Protein FYV10 (FYV10) of Eremothecium gossypii (strain ATCC 10895 / CBS 109.51 / FGSC 9923 / NRRL Y-1056) (Yeast).